An 868-amino-acid chain; its full sequence is Leucine--tRNA ligase (868 aa).

The short motif at 42-52 (PYPSGKLHMGH) is the 'HIGH' region element. A 'KMSKS' region motif is present at residues 627–631 (KMSKS). Residue K630 participates in ATP binding.

Belongs to the class-I aminoacyl-tRNA synthetase family.

It is found in the cytoplasm. It catalyses the reaction tRNA(Leu) + L-leucine + ATP = L-leucyl-tRNA(Leu) + AMP + diphosphate. The sequence is that of Leucine--tRNA ligase from Pseudomonas syringae pv. tomato (strain ATCC BAA-871 / DC3000).